Reading from the N-terminus, the 842-residue chain is Elongation factor 2 (842 aa).

Residues 17–253 (TNVRNMSVIA…LWGDSYFNPK (237 aa)) form the tr-type G domain. GTP contacts are provided by residues 26-33 (AHVDHGKS), 158-161 (NKVD), and 213-215 (SGL). His-699 carries the post-translational modification Diphthamide.

The protein belongs to the TRAFAC class translation factor GTPase superfamily. Classic translation factor GTPase family. EF-G/EF-2 subfamily.

It localises to the cytoplasm. It carries out the reaction GTP + H2O = GDP + phosphate + H(+). Catalyzes the GTP-dependent ribosomal translocation step during translation elongation. During this step, the ribosome changes from the pre-translocational (PRE) to the post-translocational (POST) state as the newly formed A-site-bound peptidyl-tRNA and P-site-bound deacylated tRNA move to the P and E sites, respectively. Catalyzes the coordinated movement of the two tRNA molecules, the mRNA and conformational changes in the ribosome. The sequence is that of Elongation factor 2 (EFT1) from Komagataella pastoris (Yeast).